The chain runs to 556 residues: Potassium-transporting ATPase potassium-binding subunit (556 aa).

10 helical membrane passes run 6-26, 65-85, 133-153, 176-196, 249-269, 283-303, 378-398, 415-435, 483-503, and 526-546; these read AGIA…VPLG, SVLA…LVQG, GLAV…IALV, LRIL…GGAI, PTPW…FSLP, VAIA…TMLL, GLYG…LMVG, LAAS…AIAM, ALGL…LALA, and FVGM…LPIL.

Belongs to the KdpA family. The system is composed of three essential subunits: KdpA, KdpB and KdpC.

Its subcellular location is the cell membrane. Part of the high-affinity ATP-driven potassium transport (or Kdp) system, which catalyzes the hydrolysis of ATP coupled with the electrogenic transport of potassium into the cytoplasm. This subunit binds the extracellular potassium ions and delivers the ions to the membrane domain of KdpB through an intramembrane tunnel. The polypeptide is Potassium-transporting ATPase potassium-binding subunit (Mycolicibacterium smegmatis (strain ATCC 700084 / mc(2)155) (Mycobacterium smegmatis)).